A 272-amino-acid polypeptide reads, in one-letter code: MKKIARITTQKKHKNRYNIFLQTPDGGDAYGFSVDEAILIEYRLSKGMELEDEMISILEQKDTLHKAYTLTIHFLSYRMRSEKEVSDYLQKKEVDEEHIAEIIKRLKKEKWVDDQQFAEMFVRSRINSSSKGPKMIQQELFEKGVDGSKITSALEQYPVEEQKQKVEKLISKKLQSKSKDSHQKRIDQIKQNLMQKGFDSGVISMVIQQMDTTEDTDREWEVLQLQGEKLLYKYQKKHSGFALKQKVMEGLYRKGFSFDMINQFIDQSLQDE.

This sequence belongs to the RecX family.

Its subcellular location is the cytoplasm. In terms of biological role, modulates RecA activity. The chain is Regulatory protein RecX from Oceanobacillus iheyensis (strain DSM 14371 / CIP 107618 / JCM 11309 / KCTC 3954 / HTE831).